A 327-amino-acid chain; its full sequence is Carboxylesterase 20 (327 aa).

The Involved in the stabilization of the negatively charged intermediate by the formation of the oxyanion hole signature appears at 87 to 89; the sequence is HGG. The active-site Nucleophile is the Ser-166. Residues Asp-272 and His-302 contribute to the active site.

Belongs to the 'GDXG' lipolytic enzyme family. As to expression, expressed in roots, stems, flowers and siliques.

It catalyses the reaction a carboxylic ester + H2O = an alcohol + a carboxylate + H(+). Its activity is regulated as follows. Esterase activity measured in vitro with the synthetic substrate p-nitrophenyl acetate (pNPA) is inhibited by strigolactone. In terms of biological role, carboxylesterase that possesses esterase activity in vitro with the synthetic substrate p-nitrophenyl acetate (pNPA). Binds strigolactones, but is not able to hydrolyze them. May be involved in the regulation of shoot branching. This chain is Carboxylesterase 20, found in Arabidopsis thaliana (Mouse-ear cress).